We begin with the raw amino-acid sequence, 556 residues long: Formate--tetrahydrofolate ligase 1 (556 aa).

ATP is bound at residue 65–72 (TPAGEGKS).

Belongs to the formate--tetrahydrofolate ligase family.

It catalyses the reaction (6S)-5,6,7,8-tetrahydrofolate + formate + ATP = (6R)-10-formyltetrahydrofolate + ADP + phosphate. The protein operates within one-carbon metabolism; tetrahydrofolate interconversion. In Streptococcus pyogenes serotype M18 (strain MGAS8232), this protein is Formate--tetrahydrofolate ligase 1.